Reading from the N-terminus, the 302-residue chain is Sulfate adenylyltransferase subunit 2 (302 aa).

It belongs to the PAPS reductase family. CysD subfamily. In terms of assembly, heterodimer composed of CysD, the smaller subunit, and CysN.

It catalyses the reaction sulfate + ATP + H(+) = adenosine 5'-phosphosulfate + diphosphate. It participates in sulfur metabolism; hydrogen sulfide biosynthesis; sulfite from sulfate: step 1/3. In terms of biological role, with CysN forms the ATP sulfurylase (ATPS) that catalyzes the adenylation of sulfate producing adenosine 5'-phosphosulfate (APS) and diphosphate, the first enzymatic step in sulfur assimilation pathway. APS synthesis involves the formation of a high-energy phosphoric-sulfuric acid anhydride bond driven by GTP hydrolysis by CysN coupled to ATP hydrolysis by CysD. The sequence is that of Sulfate adenylyltransferase subunit 2 from Salmonella schwarzengrund (strain CVM19633).